Consider the following 123-residue polypeptide: Small ribosomal subunit protein uS13 (123 aa).

The disordered stretch occupies residues 97–123 (PCRGQRTHTNSRTRKGPRRGVMAKKKK).

Belongs to the universal ribosomal protein uS13 family. Part of the 30S ribosomal subunit. Forms a loose heterodimer with protein S19. Forms two bridges to the 50S subunit in the 70S ribosome.

In terms of biological role, located at the top of the head of the 30S subunit, it contacts several helices of the 16S rRNA. In the 70S ribosome it contacts the 23S rRNA (bridge B1a) and protein L5 of the 50S subunit (bridge B1b), connecting the 2 subunits; these bridges are implicated in subunit movement. Contacts the tRNAs in the A and P-sites. The chain is Small ribosomal subunit protein uS13 from Solidesulfovibrio magneticus (strain ATCC 700980 / DSM 13731 / RS-1) (Desulfovibrio magneticus).